A 541-amino-acid polypeptide reads, in one-letter code: Malate synthase (541 aa).

Arg-172 functions as the Proton acceptor in the catalytic mechanism. Asp-452 functions as the Proton donor in the catalytic mechanism.

The protein belongs to the malate synthase family.

It is found in the cytoplasm. The enzyme catalyses glyoxylate + acetyl-CoA + H2O = (S)-malate + CoA + H(+). Its pathway is carbohydrate metabolism; glyoxylate cycle; (S)-malate from isocitrate: step 2/2. This Myxococcus xanthus (strain DK1622) protein is Malate synthase (mls).